The primary structure comprises 436 residues: MQPVVETLSGLERRVDLAVSVADVEKEVQAQLKRVARTAKVPGFRPGKAPLAMLERSHGPGIRYDVINGQVGRAFEQAVDGAKLRVAGSPTLEPKTEGVADDTLAFTATFEVYPEVAVPDLSALSVTRYETAVTDAEVQQTLDVLRKQRANFEAREGRAAQDGDRVTLDFAGTIDGVPFEGGKAESFPFVLGQGRMLPEFEAAAKGLKAGETKVFPLKFPDDYQGKEVAGKTAEFTITVKEVAEGVLPEVNAEFAKSLGQAEGDVEKLKADIRTNIEREAKARTQGRTKASVMDALVEAGKFDVPKALVDSDVQSRVQAAREELKQRGVPNAESVPIPAEAFATESERRVRLGLLVSELVKQAQLQAKPEQVRARIEEFAQNYEQPAQVVSYYLADRQRRAEIEAIVLEDNVVQHVLDKAKVTEEKVPFDQLMGMA.

A PPIase FKBP-type domain is found at 163 to 248; it reads GDRVTLDFAG…VKEVAEGVLP (86 aa).

This sequence belongs to the FKBP-type PPIase family. Tig subfamily.

It is found in the cytoplasm. It catalyses the reaction [protein]-peptidylproline (omega=180) = [protein]-peptidylproline (omega=0). In terms of biological role, involved in protein export. Acts as a chaperone by maintaining the newly synthesized protein in an open conformation. Functions as a peptidyl-prolyl cis-trans isomerase. The protein is Trigger factor of Bordetella petrii (strain ATCC BAA-461 / DSM 12804 / CCUG 43448).